Consider the following 347-residue polypeptide: L-threonine 3-dehydrogenase (347 aa).

Position 42 (Cys-42) interacts with Zn(2+). Active-site charge relay system residues include Thr-44 and His-47. Zn(2+)-binding residues include His-67, Glu-68, Cys-97, Cys-100, Cys-103, and Cys-111. Residues Ile-180, Asp-200, Arg-205, 267 to 269, and 292 to 293 contribute to the NAD(+) site; these read LSL and IT.

The protein belongs to the zinc-containing alcohol dehydrogenase family. Homotetramer. It depends on Zn(2+) as a cofactor.

Its subcellular location is the cytoplasm. It catalyses the reaction L-threonine + NAD(+) = (2S)-2-amino-3-oxobutanoate + NADH + H(+). Its pathway is amino-acid degradation; L-threonine degradation via oxydo-reductase pathway; glycine from L-threonine: step 1/2. Its function is as follows. Catalyzes the NAD(+)-dependent oxidation of L-threonine to 2-amino-3-ketobutyrate. The polypeptide is L-threonine 3-dehydrogenase (Bacillus velezensis (strain DSM 23117 / BGSC 10A6 / LMG 26770 / FZB42) (Bacillus amyloliquefaciens subsp. plantarum)).